The sequence spans 130 residues: uncharacterized protein (130 aa).

The helical transmembrane segment at 8–28 (PFILMIIVLGLFLVSIGGYYY) threads the bilayer.

Its subcellular location is the membrane. This is an uncharacterized protein from Bacillus anthracis.